The following is a 250-amino-acid chain: Triosephosphate isomerase (250 aa).

A substrate-binding site is contributed by 9–11 (NWK). The active-site Electrophile is the H96. E166 (proton acceptor) is an active-site residue. Substrate is bound by residues G172, S212, and 233 to 234 (GG).

It belongs to the triosephosphate isomerase family. In terms of assembly, homodimer.

It localises to the cytoplasm. It carries out the reaction D-glyceraldehyde 3-phosphate = dihydroxyacetone phosphate. It functions in the pathway carbohydrate biosynthesis; gluconeogenesis. The protein operates within carbohydrate degradation; glycolysis; D-glyceraldehyde 3-phosphate from glycerone phosphate: step 1/1. In terms of biological role, involved in the gluconeogenesis. Catalyzes stereospecifically the conversion of dihydroxyacetone phosphate (DHAP) to D-glyceraldehyde-3-phosphate (G3P). This Chlorobium phaeobacteroides (strain BS1) protein is Triosephosphate isomerase.